The sequence spans 348 residues: Chaperone protein DnaJ (348 aa).

In terms of domain architecture, J spans 3 to 65 (DLYGILGVDH…EQRQRYDRHV (63 aa)). The CR-type zinc finger occupies 109–191 (GGSQVVKIDS…CYGNGSRSAP (83 aa)). Residues cysteine 122, cysteine 125, cysteine 139, cysteine 142, cysteine 165, cysteine 168, cysteine 179, and cysteine 182 each contribute to the Zn(2+) site. CXXCXGXG motif repeat units follow at residues 122 to 129 (CDVCNGTR), 139 to 146 (CFDCNGSG), 165 to 172 (CSKCRGNG), and 179 to 186 (CRRCYGNG).

This sequence belongs to the DnaJ family. As to quaternary structure, homodimer. Zn(2+) serves as cofactor.

It localises to the cytoplasm. Functionally, participates actively in the response to hyperosmotic and heat shock by preventing the aggregation of stress-denatured proteins and by disaggregating proteins, also in an autonomous, DnaK-independent fashion. Unfolded proteins bind initially to DnaJ; upon interaction with the DnaJ-bound protein, DnaK hydrolyzes its bound ATP, resulting in the formation of a stable complex. GrpE releases ADP from DnaK; ATP binding to DnaK triggers the release of the substrate protein, thus completing the reaction cycle. Several rounds of ATP-dependent interactions between DnaJ, DnaK and GrpE are required for fully efficient folding. Also involved, together with DnaK and GrpE, in the DNA replication of plasmids through activation of initiation proteins. This Tropheryma whipplei (strain Twist) (Whipple's bacillus) protein is Chaperone protein DnaJ.